The primary structure comprises 55 residues: MQILLVVRLVLLWLGGLSAAALGITETAASAHFGTRIGWGKFEQDPNIYYNETQY.

An N-terminal signal peptide occupies residues 1–19; that stretch reads MQILLVVRLVLLWLGGLSA.

This is an uncharacterized protein from Orgyia pseudotsugata multicapsid polyhedrosis virus (OpMNPV).